The primary structure comprises 110 residues: MATTHGIALGMIETRGLVPAIEAADAMTKAAEVRLVGRSFVGGGYVTVMVRGETGAVNAAVRAGADACERVGDGLVAAHIIARVHSEVEIILPETPEDSDSAWCIANLNS.

Positions 8–93 constitute a BMC domain; that stretch reads ALGMIETRGL…VHSEVEIILP (86 aa).

The protein belongs to the bacterial microcompartments protein family. CsoS1 subfamily. In terms of assembly, homohexamer with a small central pore. Interacts with the N-terminus (residues 1-136) of RuBisCO (CbbL).

The protein localises to the carboxysome. One of shell proteins of the carboxysome, a polyhedral inclusion where RuBisCO (ribulose bisphosphate carboxylase, ccbL-ccbS) is sequestered. Assembles into hexamers which make sheets that form the facets of the polyhedral carboxysome. The shell probably limits the diffusion of CO(2) into and out of the carboxysome. There are estimated to be 540 CsoS1B proteins per carboxysome. Functionally, unlike beta-carboxysomes, alpha-carboxysomes (Cb) can form without cargo protein. CsoS2 is essential for Cb formation and is also capable of targeting foreign proteins to the Cb. The Cb shell assembles with the aid of CsoS2; CsoS1A, CsoS1B and CsoS1C form the majority of the shell while CsoS4A and CsoS4B form vertices. CsoS1D forms pseudohexamers that probably control metabolite flux into and out of the shell. In Halothiobacillus neapolitanus (strain ATCC 23641 / c2) (Thiobacillus neapolitanus), this protein is Carboxysome shell protein CsoS1B.